Reading from the N-terminus, the 930-residue chain is Protein translocase subunit SecA (930 aa).

ATP-binding positions include Gln87, 105–109 (GEGKT), and Asp515. The Zn(2+) site is built by Cys914, Cys916, Cys925, and His926.

The protein belongs to the SecA family. Monomer and homodimer. Part of the essential Sec protein translocation apparatus which comprises SecA, SecYEG and auxiliary proteins SecDF-YajC and YidC. Zn(2+) is required as a cofactor.

It localises to the cell inner membrane. Its subcellular location is the cytoplasm. The catalysed reaction is ATP + H2O + cellular proteinSide 1 = ADP + phosphate + cellular proteinSide 2.. Functionally, part of the Sec protein translocase complex. Interacts with the SecYEG preprotein conducting channel. Has a central role in coupling the hydrolysis of ATP to the transfer of proteins into and across the cell membrane, serving both as a receptor for the preprotein-SecB complex and as an ATP-driven molecular motor driving the stepwise translocation of polypeptide chains across the membrane. The sequence is that of Protein translocase subunit SecA from Burkholderia thailandensis (strain ATCC 700388 / DSM 13276 / CCUG 48851 / CIP 106301 / E264).